The primary structure comprises 135 residues: MGGSKVYSLAEVSEHSQPNDCWLVIGGKVYDVTKFLDDHPGGADVLLSSTAKDATDDFEDIGHSSSARAMMDEMCVGDIDSSTIPTKTSYTPPKQPLYNQDKTPQFIIKLLQFLVPLIILGVAVGIRFYKKQSSD.

A Cytochrome b5 heme-binding domain is found at 4–80 (SKVYSLAEVS…MDEMCVGDID (77 aa)). The heme site is built by His39 and His63. The chain crosses the membrane as a helical span at residues 106–126 (FIIKLLQFLVPLIILGVAVGI).

The protein belongs to the cytochrome b5 family.

It is found in the endoplasmic reticulum membrane. Its subcellular location is the microsome membrane. Its function is as follows. Membrane bound hemoprotein which function as an electron carrier for several membrane bound oxygenases. The protein is Cytochrome b5 of Cuscuta reflexa (Southern Asian dodder).